A 156-amino-acid polypeptide reads, in one-letter code: Small ribosomal subunit protein uS7 (156 aa).

This sequence belongs to the universal ribosomal protein uS7 family. In terms of assembly, part of the 30S ribosomal subunit. Contacts proteins S9 and S11.

One of the primary rRNA binding proteins, it binds directly to 16S rRNA where it nucleates assembly of the head domain of the 30S subunit. Is located at the subunit interface close to the decoding center, probably blocks exit of the E-site tRNA. The protein is Small ribosomal subunit protein uS7 of Synechococcus sp. (strain CC9605).